Consider the following 122-residue polypeptide: Large ribosomal subunit protein uL14 (122 aa).

This sequence belongs to the universal ribosomal protein uL14 family. Part of the 50S ribosomal subunit. Forms a cluster with proteins L3 and L19. In the 70S ribosome, L14 and L19 interact and together make contacts with the 16S rRNA in bridges B5 and B8.

In terms of biological role, binds to 23S rRNA. Forms part of two intersubunit bridges in the 70S ribosome. The protein is Large ribosomal subunit protein uL14 of Ruegeria pomeroyi (strain ATCC 700808 / DSM 15171 / DSS-3) (Silicibacter pomeroyi).